Reading from the N-terminus, the 80-residue chain is Large ribosomal subunit protein bL31B (80 aa).

Belongs to the bacterial ribosomal protein bL31 family. Type B subfamily. In terms of assembly, part of the 50S ribosomal subunit.

In Streptococcus mutans serotype c (strain ATCC 700610 / UA159), this protein is Large ribosomal subunit protein bL31B.